Consider the following 102-residue polypeptide: CRISPR-associated endoribonuclease Cas2 1 (102 aa).

Asp17 contacts Mg(2+).

This sequence belongs to the CRISPR-associated endoribonuclease Cas2 protein family. Homodimer, forms a heterotetramer with a Cas1 homodimer. Requires Mg(2+) as cofactor.

CRISPR (clustered regularly interspaced short palindromic repeat), is an adaptive immune system that provides protection against mobile genetic elements (viruses, transposable elements and conjugative plasmids). CRISPR clusters contain sequences complementary to antecedent mobile elements and target invading nucleic acids. CRISPR clusters are transcribed and processed into CRISPR RNA (crRNA). Functions as a ssRNA-specific endoribonuclease. Involved in the integration of spacer DNA into the CRISPR cassette. In Rhodospirillum rubrum (strain ATCC 11170 / ATH 1.1.1 / DSM 467 / LMG 4362 / NCIMB 8255 / S1), this protein is CRISPR-associated endoribonuclease Cas2 1.